We begin with the raw amino-acid sequence, 266 residues long: MVKVTFNSALAQKEAKKDEPKSSEEALIAPPDAVAVDCKDPDDVVPVGQRRAWCWCMCFGLAFMLAGVILGGAYLYKYFALQPDDVYYCGLKYIKDDVILSEPSADAPAARYQTIEENIKIFEEDAVEFISVPVPEFADSDPANIVHDFNKKLTAYLDLNLDKCYVIPLNTSIVMPPRNLLELLINIKAGTYLPQSYLIHEHMVITDRIENVDHLGFFIYRLCHDKETYKLQRRETIRGIQKREASNCFTIRHFENKFAVETLICS.

The Cytoplasmic portion of the chain corresponds to 1-54 (MVKVTFNSALAQKEAKKDEPKSSEEALIAPPDAVAVDCKDPDDVVPVGQRRAWC). Residues 55–75 (WCMCFGLAFMLAGVILGGAYL) traverse the membrane as a helical; Signal-anchor for type II membrane protein segment. Residues 76 to 266 (YKYFALQPDD…KFAVETLICS (191 aa)) are Lumenal-facing. The tract at residues 102 to 134 (EPSADAPAARYQTIEENIKIFEEDAVEFISVPV) is necessary for interaction with APP and inhibitor effects on APP processing. Residues 137-231 (FADSDPANIV…LCHDKETYKL (95 aa)) form the BRICHOS domain. Disulfide bonds link Cys-164–Cys-223 and Cys-248–Cys-265. An N-linked (GlcNAc...) asparagine glycan is attached at Asn-170.

The protein belongs to the ITM2 family. Homodimer; disulfide-linked. Interacts with SPPL2A and SPPL2B. Interacts with APP. Mature BRI2 (mBRI2) interacts with the APP amyloid-beta A4 protein; the interaction occurs at the cell surface and in the endocytic compartments and enable alpha- and beta-secretase-induced APP cleavage inhibition. Mature BRI2 (mBRI2) interacts with the APP C99; the interaction occurs in the endocytic compartments and enable gamma-secretase-induced C99 cleavage inhibition. May form heterodimers with Bri23 peptide and APP amyloid-beta protein 40. Interacts with ADAM7 in sperm; the interaction increases following capacitation. Post-translationally, the ectodomain C-terminal part of the imBRI2 is processed by furin producing a secreted Bri23 peptide and a mature BRI2, membrane form (mBRI2). The remaining part of the ectodomain of mBRI2 containing the BRICHOS domain is cleaved by ADAM10 and is secreted (BRI2C, soluble form). The membrane-bound N-terminal fragment (BRI2C, membrane form) is further proteolytically processed by SPPL2A and SPPL2B through regulated intramembrane proteolysis producing a secreted C-peptide and a BRI2 intracellular domain (BRI2 ICD) released in the cytosol. Shedding by ADAM10 facilitates intramembrane cleavage but is not absolutely required for BRI2 ICD generation. In terms of processing, glycosylation at Asn-170 is important for cell surface localization, but doesn't affect furin- and ADAM10-induced proteolytic processing.

Its subcellular location is the golgi apparatus membrane. The protein resides in the cell membrane. The protein localises to the endosome membrane. It is found in the secreted. Its function is as follows. Plays a regulatory role in the processing of the amyloid-beta A4 precursor protein (APP) and acts as an inhibitor of the amyloid-beta peptide aggregation and fibrils deposition. Plays a role in the induction of neurite outgrowth. Functions as a protease inhibitor by blocking access of secretases to APP cleavage sites. In terms of biological role, mature BRI2 (mBRI2) functions as a modulator of the amyloid-beta A4 precursor protein (APP) processing leading to a strong reduction in the secretion of secretase-processed amyloid-beta protein 40 and amyloid-beta protein 42. Bri23 peptide prevents aggregation of APP amyloid-beta protein 42 into toxic oligomers. The protein is Integral membrane protein 2B (Itm2b) of Rattus norvegicus (Rat).